The primary structure comprises 889 residues: Alanine--tRNA ligase (889 aa).

4 residues coordinate Zn(2+): His574, His578, Cys676, and His680.

The protein belongs to the class-II aminoacyl-tRNA synthetase family. It depends on Zn(2+) as a cofactor.

Its subcellular location is the cytoplasm. It carries out the reaction tRNA(Ala) + L-alanine + ATP = L-alanyl-tRNA(Ala) + AMP + diphosphate. Catalyzes the attachment of alanine to tRNA(Ala) in a two-step reaction: alanine is first activated by ATP to form Ala-AMP and then transferred to the acceptor end of tRNA(Ala). Also edits incorrectly charged Ser-tRNA(Ala) and Gly-tRNA(Ala) via its editing domain. This Thermobifida fusca (strain YX) protein is Alanine--tRNA ligase.